The primary structure comprises 79 residues: Small ribosomal subunit protein bS16 (79 aa).

Belongs to the bacterial ribosomal protein bS16 family.

This chain is Small ribosomal subunit protein bS16, found in Nitratidesulfovibrio vulgaris (strain DSM 19637 / Miyazaki F) (Desulfovibrio vulgaris).